Consider the following 128-residue polypeptide: MRHRVAHRKFSRTSAHRISMLLNLSISLIKHERITTTLPKAKELRPYVEKLITIGKVYREKNLVYGKRLLISKLKNIDATDKLIDVLSVRYKSRNGGYTRIMKNGFRKGDCAPIAIIELVDRQIVSQS.

This sequence belongs to the bacterial ribosomal protein bL17 family. Part of the 50S ribosomal subunit. Contacts protein L32.

The chain is Large ribosomal subunit protein bL17 from Ehrlichia ruminantium (strain Gardel).